The primary structure comprises 308 residues: ADP-L-glycero-D-manno-heptose-6-epimerase (308 aa).

NADP(+) contacts are provided by residues 10–11 (FI), 31–32 (DN), Lys38, Lys53, 75–79 (EGACS), and Asn92. The active-site Proton acceptor is the Tyr139. Residue Lys143 participates in NADP(+) binding. A substrate-binding site is contributed by Asn168. NADP(+) is bound by residues Val169 and Lys177. Lys177 serves as the catalytic Proton acceptor. Substrate is bound by residues Ser179, His186, 200-203 (FAGS), Arg208, and Tyr271.

It belongs to the NAD(P)-dependent epimerase/dehydratase family. HldD subfamily. Homopentamer. Requires NADP(+) as cofactor.

The catalysed reaction is ADP-D-glycero-beta-D-manno-heptose = ADP-L-glycero-beta-D-manno-heptose. Its pathway is nucleotide-sugar biosynthesis; ADP-L-glycero-beta-D-manno-heptose biosynthesis; ADP-L-glycero-beta-D-manno-heptose from D-glycero-beta-D-manno-heptose 7-phosphate: step 4/4. It functions in the pathway bacterial outer membrane biogenesis; LOS core biosynthesis. Functionally, catalyzes the interconversion between ADP-D-glycero-beta-D-manno-heptose and ADP-L-glycero-beta-D-manno-heptose via an epimerization at carbon 6 of the heptose. This is ADP-L-glycero-D-manno-heptose-6-epimerase from Haemophilus influenzae (strain ATCC 51907 / DSM 11121 / KW20 / Rd).